Reading from the N-terminus, the 301-residue chain is Ribosomal RNA small subunit methyltransferase H (301 aa).

Residues 35 to 37 (GGH), Asp-55, Phe-84, Asp-105, and Gln-112 contribute to the S-adenosyl-L-methionine site.

This sequence belongs to the methyltransferase superfamily. RsmH family.

It is found in the cytoplasm. It carries out the reaction cytidine(1402) in 16S rRNA + S-adenosyl-L-methionine = N(4)-methylcytidine(1402) in 16S rRNA + S-adenosyl-L-homocysteine + H(+). Functionally, specifically methylates the N4 position of cytidine in position 1402 (C1402) of 16S rRNA. This Chloroflexus aurantiacus (strain ATCC 29366 / DSM 635 / J-10-fl) protein is Ribosomal RNA small subunit methyltransferase H.